We begin with the raw amino-acid sequence, 343 residues long: Mating-type protein MAT-2 (343 aa).

2 disordered regions span residues 98–117 and 177–223; these read RSPQVVSSPQSAQTSPSEQT and KKPW…AAMT. Positions 99–117 are enriched in low complexity; sequence SPQVVSSPQSAQTSPSEQT. Residues 131-199 constitute a DNA-binding region (HMG box); the sequence is APRPMNCWII…EHLRQHPNYK (69 aa). The span at 206 to 218 shows a compositional bias: basic residues; sequence GEKKKRQSRKSKR.

Its subcellular location is the nucleus. This Cochliobolus heterostrophus (Southern corn leaf blight fungus) protein is Mating-type protein MAT-2 (MAT2).